The following is a 169-amino-acid chain: CRISPR system Cmr subunit Cmr5 (169 aa).

The protein belongs to the CRISPR system Cmr5 family. In terms of assembly, monomer in isolation. Part of the type III-B Cmr ribonucleoprotein (RNP) complex, an elongated RNP with Cmr2 and Cmr3 as the base, with Cmr4 and Cmr5 forming a helical core along the mature crRNA (39 or 45 nt in length), while the complex is capped by Cmr6 and Cmr1. The 5' end of the crRNA is bound to Cmr2 and Cmr3, while Cmr6 and a Cmr1 subunit (Cmr1-1 or Cmr1-2) cap the 3' end of the crRNA. The target RNA lies antiparallel to the crRNA, with its 5' end near Cmr1 and Cmr6 and its 3' end near Cmr2 and Cmr3; major target cleavage occurs nears the junction of Cmr1/Cmr6 and Cmr4/Cmr, with minor cleavage occurring at 6 nt intervals which coincide with the proposed spacing of Cmr4 subunits. Interacts with Cmr4. Interacts with Cmr2, Cmr4 and Cmr6.

The protein localises to the cytoplasm. Its function is as follows. CRISPR (clustered regularly interspaced short palindromic repeat), is an adaptive immune system that provides protection against mobile genetic elements (viruses, transposable elements and conjugative plasmids). CRISPR clusters contain sequences complementary to antecedent mobile elements and target invading nucleic acids. CRISPR clusters are transcribed and processed into CRISPR RNA (crRNA), formerly called psiRNA (prokaryotic silencing) in this organism. Part of the Cmr ribonucleoprotein complex which has divalent cation-dependent endoribonuclease activity specific for ssRNA complementary to the crRNA (target NRA), generating 5' hydroxy- and 3' phosphate or 2'-3' cyclic phosphate termini. Cmr4 is probably the subunit that cleaves target RNA. Cmr complex does not cleave ssDNA complementary to the crRNA. Cleavage of invading RNA is guided by the crRNA; substrate cleavage occurs a fixed distance (14 nt) from the 3' end of the crRNA. In vitro reconstitution shows Cmr1-2 and Cmr5 are not absolutely necessary for target cleavage. This is CRISPR system Cmr subunit Cmr5 from Pyrococcus furiosus (strain ATCC 43587 / DSM 3638 / JCM 8422 / Vc1).